The chain runs to 220 residues: Ribose-5-phosphate isomerase A (220 aa).

Substrate-binding positions include 28–31, 81–84, and 94–97; these read TGST, DGAD, and KGGG. Glu-103 functions as the Proton acceptor in the catalytic mechanism. Residue Lys-121 coordinates substrate.

The protein belongs to the ribose 5-phosphate isomerase family. As to quaternary structure, homodimer.

The enzyme catalyses aldehydo-D-ribose 5-phosphate = D-ribulose 5-phosphate. It participates in carbohydrate degradation; pentose phosphate pathway; D-ribose 5-phosphate from D-ribulose 5-phosphate (non-oxidative stage): step 1/1. Its function is as follows. Catalyzes the reversible conversion of ribose-5-phosphate to ribulose 5-phosphate. This chain is Ribose-5-phosphate isomerase A, found in Coxiella burnetii (strain CbuK_Q154) (Coxiella burnetii (strain Q154)).